The primary structure comprises 922 residues: Protein translocase subunit SecA (922 aa).

Residues Gln87, Gly105–Thr109, and Asp516 contribute to the ATP site. A disordered region spans residues Tyr867–Lys912. Zn(2+) is bound by residues Cys906, Cys908, Cys917, and His918.

This sequence belongs to the SecA family. As to quaternary structure, monomer and homodimer. Part of the essential Sec protein translocation apparatus which comprises SecA, SecYEG and auxiliary proteins SecDF-YajC and YidC. It depends on Zn(2+) as a cofactor.

The protein localises to the cell inner membrane. The protein resides in the cytoplasm. It carries out the reaction ATP + H2O + cellular proteinSide 1 = ADP + phosphate + cellular proteinSide 2.. Functionally, part of the Sec protein translocase complex. Interacts with the SecYEG preprotein conducting channel. Has a central role in coupling the hydrolysis of ATP to the transfer of proteins into and across the cell membrane, serving both as a receptor for the preprotein-SecB complex and as an ATP-driven molecular motor driving the stepwise translocation of polypeptide chains across the membrane. This is Protein translocase subunit SecA from Paracidovorax citrulli (strain AAC00-1) (Acidovorax citrulli).